The primary structure comprises 542 residues: Cytochrome P450 27C1 (542 aa).

Residues 1–80 (MQTSAMALLA…LAAMPGPRTL (80 aa)) constitute a mitochondrion transit peptide. Residues 20 to 75 (APERGGLLGGGAPRRPQPAGARLPAGARAEDKGAGRPGSPPGGGRAEGPRSLAAMP) form a disordered region. Positions 32 to 46 (PRRPQPAGARLPAGA) are enriched in low complexity. A heme-binding site is contributed by Cys-488.

Belongs to the cytochrome P450 family. The cofactor is heme. As to expression, widely expressed, with highest levels in the liver, kidney and pancreas. Expressed in the skin (at protein level).

The protein localises to the mitochondrion membrane. The catalysed reaction is all-trans-retinol + 2 reduced [adrenodoxin] + O2 + 2 H(+) = all-trans-3,4-didehydroretinol + 2 oxidized [adrenodoxin] + 2 H2O. It catalyses the reaction all-trans-retinol + 2 reduced [adrenodoxin] + O2 + 2 H(+) = all-trans-4-hydroxyretinol + 2 oxidized [adrenodoxin] + H2O. It carries out the reaction all-trans-retinol + 2 reduced [adrenodoxin] + O2 + 2 H(+) = all-trans-3-hydroxyretinol + 2 oxidized [adrenodoxin] + H2O. Its pathway is cofactor metabolism; retinol metabolism. Functionally, a cytochrome P450 monooxygenase that catalyzes the 3,4 desaturation of all-trans-retinol (also called vitamin A1) to all-trans-3,4-didehydroretinol (also called vitamin A2) in the skin. Desaturates with lower efficiency all-trans retinal and all-trans retinoic acid. Forms minor amounts of 3-hydroxy and 4-hydroxy all-trans-retinol derivatives. Mechanistically, uses molecular oxygen inserting one oxygen atom into a substrate and reducing the second into a water molecule. Two electrons are provided by NADPH via a two-protein mitochondrial transfer system comprising flavoprotein FDXR (adrenodoxin/ferredoxin reductase) and nonheme iron-sulfur protein FDX1 or FDX2 (adrenodoxin/ferredoxin). The polypeptide is Cytochrome P450 27C1 (Homo sapiens (Human)).